The primary structure comprises 79 residues: Small ribosomal subunit protein uS17 (79 aa).

Belongs to the universal ribosomal protein uS17 family. In terms of assembly, part of the 30S ribosomal subunit.

One of the primary rRNA binding proteins, it binds specifically to the 5'-end of 16S ribosomal RNA. This Paramagnetospirillum magneticum (strain ATCC 700264 / AMB-1) (Magnetospirillum magneticum) protein is Small ribosomal subunit protein uS17.